The following is a 234-amino-acid chain: Probable septum site-determining protein MinC (234 aa).

The protein belongs to the MinC family. In terms of assembly, interacts with MinD and FtsZ.

Cell division inhibitor that blocks the formation of polar Z ring septums. Rapidly oscillates between the poles of the cell to destabilize FtsZ filaments that have formed before they mature into polar Z rings. Prevents FtsZ polymerization. The chain is Probable septum site-determining protein MinC from Pseudoalteromonas translucida (strain TAC 125).